Consider the following 206-residue polypeptide: Probable glutathione peroxidase 3, mitochondrial (206 aa).

The transit peptide at 1 to 12 (MPRSSRWVNQRA) directs the protein to the mitochondrion. Residue cysteine 80 is part of the active site.

It belongs to the glutathione peroxidase family. As to quaternary structure, interacts with ABI1 and ABI2. As to expression, ubiquitous.

The protein localises to the mitochondrion. The enzyme catalyses 2 glutathione + H2O2 = glutathione disulfide + 2 H2O. The redox states are modulated by H(2)O(2). Its function is as follows. May constitute a glutathione peroxidase-like protective system against oxidative stresses. Involved positively in abscisic acid (ABA) signaling pathway that regulates numerous ABA responses, such as stomatal closure, seed germination and inhibition of vegetative growth. Oxidizes and represses target proteins (e.g. the phosphatase activity of ABI1 and ABI2) when oxidized by H(2)O(2), probably after ABA signaling. Modulates the calcium channel activity in guard cells in response to ABA or H(2)O(2). Confers tolerance to drought stress, by enhancing the ABA-dependent stomatal closure. The protein is Probable glutathione peroxidase 3, mitochondrial (GPX3) of Arabidopsis thaliana (Mouse-ear cress).